Consider the following 341-residue polypeptide: Putative UPF0607 protein FLJ37424 (341 aa).

Disordered regions lie at residues 72 to 131 (PKTE…NPRP) and 216 to 283 (GLLM…LPCL). Over residues 79-101 (EEPKEATEVKDQVETQGQEDNKR) the composition is skewed to basic and acidic residues. Residues 108-127 (EAASTSRPLETQGNLTSSWY) show a composition bias toward polar residues. Over residues 243-252 (AGHRSHKRKL) the composition is skewed to basic residues.

It belongs to the UPF0607 family.

This is Putative UPF0607 protein FLJ37424 from Homo sapiens (Human).